The following is a 143-amino-acid chain: Nucleoside diphosphate kinase (143 aa).

Residues lysine 11, phenylalanine 59, arginine 87, threonine 93, arginine 104, and asparagine 114 each contribute to the ATP site. The active-site Pros-phosphohistidine intermediate is histidine 117.

The protein belongs to the NDK family. Homotetramer. The cofactor is Mg(2+).

It localises to the cytoplasm. The catalysed reaction is a 2'-deoxyribonucleoside 5'-diphosphate + ATP = a 2'-deoxyribonucleoside 5'-triphosphate + ADP. The enzyme catalyses a ribonucleoside 5'-diphosphate + ATP = a ribonucleoside 5'-triphosphate + ADP. In terms of biological role, major role in the synthesis of nucleoside triphosphates other than ATP. The ATP gamma phosphate is transferred to the NDP beta phosphate via a ping-pong mechanism, using a phosphorylated active-site intermediate. The sequence is that of Nucleoside diphosphate kinase from Escherichia coli O81 (strain ED1a).